The sequence spans 1121 residues: Phytochrome 2 (1121 aa).

The GAF domain occupies 214 to 393 (DIGLLCDTVV…VFGMQLNMEV (180 aa)). Residue Cys-319 participates in phytochromobilin binding. 2 consecutive PAS domains span residues 608–679 (VANE…SQGE) and 742–813 (DYKT…TKFM). Residues 893–1113 (YIRQEIKNPL…VVYVELPMAQ (221 aa)) enclose the Histidine kinase domain.

The protein belongs to the phytochrome family. In terms of assembly, homodimer. In terms of processing, contains one covalently linked phytochromobilin chromophore.

Its function is as follows. Regulatory photoreceptor which exists in two forms that are reversibly interconvertible by light: the Pr form that absorbs maximally in the red region of the spectrum and the Pfr form that absorbs maximally in the far-red region. Photoconversion of Pr to Pfr induces an array of morphogenic responses, whereas reconversion of Pfr to Pr cancels the induction of those responses. Pfr controls the expression of a number of nuclear genes including those encoding the small subunit of ribulose-bisphosphate carboxylase, chlorophyll A/B binding protein, protochlorophyllide reductase, rRNA, etc. It also controls the expression of its own gene(s) in a negative feedback fashion. This is Phytochrome 2 (PHY2) from Ceratodon purpureus (Fire moss).